The chain runs to 254 residues: tRNA (guanine-N(7)-)-methyltransferase (254 aa).

A disordered region spans residues 1–34 (MNTNTPAHPPEGAPLSEATQAALASAEHAPDSPG). 4 residues coordinate S-adenosyl-L-methionine: glutamate 87, glutamate 112, aspartate 139, and aspartate 162. The active site involves aspartate 162. Substrate is bound by residues lysine 166, aspartate 198, and 233 to 236 (TKFE).

Belongs to the class I-like SAM-binding methyltransferase superfamily. TrmB family.

The catalysed reaction is guanosine(46) in tRNA + S-adenosyl-L-methionine = N(7)-methylguanosine(46) in tRNA + S-adenosyl-L-homocysteine. It participates in tRNA modification; N(7)-methylguanine-tRNA biosynthesis. Catalyzes the formation of N(7)-methylguanine at position 46 (m7G46) in tRNA. The chain is tRNA (guanine-N(7)-)-methyltransferase from Bordetella pertussis (strain Tohama I / ATCC BAA-589 / NCTC 13251).